A 159-amino-acid chain; its full sequence is NADH-quinone oxidoreductase subunit B (159 aa).

[4Fe-4S] cluster is bound by residues C32, C33, C97, and C126.

This sequence belongs to the complex I 20 kDa subunit family. As to quaternary structure, NDH-1 is composed of 14 different subunits. Subunits NuoB, C, D, E, F, and G constitute the peripheral sector of the complex. [4Fe-4S] cluster is required as a cofactor.

The protein resides in the cell inner membrane. It catalyses the reaction a quinone + NADH + 5 H(+)(in) = a quinol + NAD(+) + 4 H(+)(out). In terms of biological role, NDH-1 shuttles electrons from NADH, via FMN and iron-sulfur (Fe-S) centers, to quinones in the respiratory chain. The immediate electron acceptor for the enzyme in this species is believed to be ubiquinone. Couples the redox reaction to proton translocation (for every two electrons transferred, four hydrogen ions are translocated across the cytoplasmic membrane), and thus conserves the redox energy in a proton gradient. The sequence is that of NADH-quinone oxidoreductase subunit B from Helicobacter pylori (strain HPAG1).